The chain runs to 677 residues: Platelet glycoprotein Ib alpha chain (677 aa).

An N-terminal signal peptide occupies residues 1-16 (MHLLLWLLLLARLCRP). The region spanning 17-47 (EFICEVSKVTSQVEVNCDNKGLKALPPGLPG) is the LRRNT domain. Residues 17-564 (EFICEVSKVT…NPDLCCLLPL (548 aa)) are Extracellular-facing. Cys-20 and Cys-33 are joined by a disulfide. 6 LRR repeats span residues 72 to 93 (RLAQ…GMLP), 94 to 115 (RLET…GRAL), 117 to 138 (ALTT…TLDG), 141 to 162 (HLHE…LLAP), 165 to 186 (QLRK…FLEG), and 189 to 210 (ELDT…FFGD). The LRRCT domain maps to 221 to 282 (NPWSCDCEIL…HTYQGKDCPS (62 aa)). 2 disulfides stabilise this stretch: Cys-225-Cys-264 and Cys-227-Cys-280. Residues Tyr-291 and Tyr-294 each carry the sulfotyrosine modification. Residues Thr-309, Thr-319, Thr-323, Thr-324, Thr-346, Thr-354, Thr-368, Thr-372, Thr-376, Thr-377, and Thr-399 are each glycosylated (O-linked (GalNAc...) threonine). The interval 359–499 (TLGPIMPTTT…EPTTTPTSPT (141 aa)) is disordered. 4 stretches are compositionally biased toward low complexity: residues 362 to 385 (PIMP…TTPT), 393 to 403 (PTTLEPTTTPI), 411 to 421 (PTTLEPTTTPI), and 427 to 470 (TPST…TPTI). Positions 471 to 485 (PELPTPPTTPEPTMP) are enriched in pro residues. The segment covering 486 to 499 (PTTLEPTTTPTSPT) has biased composition (low complexity). A glycan (O-linked (GalNAc...) threonine) is linked at Thr-487. Residue Ser-497 is glycosylated (O-linked (GalNAc...) serine). Thr-500 is a glycosylation site (O-linked (GalNAc...) threonine). O-linked (GalNAc...) serine glycosylation occurs at Ser-523. Residues 565 to 585 (GFYILGLLWLLFASVVLILLL) form a helical membrane-spanning segment. The Cytoplasmic portion of the chain corresponds to 586–677 (TWAQHVKPQA…VGVRYSSHSL (92 aa)). Phosphoserine occurs at positions 654 and 657.

Two GP-Ib beta are disulfide-linked to one GP-Ib alpha. GP-IX is complexed with the GP-Ib heterodimer via a non covalent linkage. Interacts with FLNB. Interacts with FLNA (via filamin repeats 4, 9, 12, 17, 19, 21, and 23). In terms of processing, O-glycosylated. Glycocalicin is the product of a proteolytic cleavage/shedding, catalyzed by ADAM17, which releases most of the extracellular domain. Binding sites for vWF and thrombin are in this part of the protein.

The protein resides in the membrane. GP-Ib, a surface membrane protein of platelets, participates in the formation of platelet plugs by binding to the A1 domain of vWF, which is already bound to the subendothelium. In Canis lupus familiaris (Dog), this protein is Platelet glycoprotein Ib alpha chain (GP1BA).